The sequence spans 128 residues: NHP2-like protein 1 (128 aa).

An N-acetylmethionine modification is found at Met-1. Thr-2 carries the N-acetylthreonine; in NHP2-like protein 1, N-terminally processed modification. The residue at position 21 (Lys-21) is an N6-acetyllysine. The segment at 36–48 is interaction with U4 snRNA and U4atac snRNA; the sequence is RKGANEATKTLNR. Positions 96 to 128 are important for U4 snRNA-binding; the sequence is SRPVIACSVTIKEGSQLKQQIQSIQQSIERLLV. Ser-122 carries the post-translational modification Phosphoserine.

The protein belongs to the eukaryotic ribosomal protein eL8 family. As to quaternary structure, identified in the spliceosome B complex. Component of the U4/U6-U5 tri-snRNP complex composed of the U4, U6 and U5 snRNAs and at least PRPF3, PRPF4, PRPF6, PRPF8, PRPF31, SNRNP200, TXNL4A, WDR57, SNRNP40, DDX23, CD2BP2, PPIH, NHP2L1, EFTUD2, SART1 and USP39. Interacts with RAD17 and PRPF31. The complex formed by SNU13 and PRPF31 binds U4 snRNA. The complex formed by SNU13 and PRPF31 also binds U4atac snRNA, a characteristic component of specific, less abundant spliceosomal complexes. Part of the small subunit (SSU) processome, composed of more than 70 proteins and the RNA chaperone small nucleolar RNA (snoRNA) U3. Core component of box C/D small nucleolar ribonucleoprotein (snoRNP) particles; the core proteins SNU13, NOP56, NOP58 and FBL or FBLL1 assemble stepwise onto the snoRNA.

The protein resides in the nucleus. The protein localises to the nucleolus. In terms of biological role, part of the small subunit (SSU) processome, first precursor of the small eukaryotic ribosomal subunit. During the assembly of the SSU processome in the nucleolus, many ribosome biogenesis factors, an RNA chaperone and ribosomal proteins associate with the nascent pre-rRNA and work in concert to generate RNA folding, modifications, rearrangements and cleavage as well as targeted degradation of pre-ribosomal RNA by the RNA exosome. Involved in pre-mRNA splicing as component of the spliceosome. Binds to the 5'-stem-loop of U4 snRNA and thereby contributes to spliceosome assembly. The protein undergoes a conformational change upon RNA-binding. Core component of box C/D small nucleolar ribonucleoprotein (snoRNP) complexes that function in methylation of multiple sites on ribosomal RNAs (rRNAs) and messenger RNAs (mRNAs). The polypeptide is NHP2-like protein 1 (Bos taurus (Bovine)).